A 499-amino-acid chain; its full sequence is Bifunctional NAD(P)H-hydrate repair enzyme Nnr (499 aa).

The interval 1–217 (MFITSKEMRR…PEIAERICGP (217 aa)) is NAD(P)H-hydrate epimerase. Positions 8 to 213 (MRRIELNSRW…NAGIPEIAER (206 aa)) constitute a YjeF N-terminal domain. The NADPHX 1; for epimerase activity stretch occupies residues 54–58 (GNGGD). Residues Asn-55 and Asp-124 each coordinate K(+). The tract at residues 128–134 (GFGIRGR) is NADPHX 1; for epimerase activity. Position 160 (Asp-160) interacts with (6S)-NADPHX. Thr-163 contributes to the K(+) binding site. The YjeF C-terminal domain maps to 217-485 (PGDLITSDIW…EYVPKVLRNP (269 aa)). Residues 217–499 (PGDLITSDIW…PEAVTEVRRD (283 aa)) are ADP-dependent (S)-NAD(P)H-hydrate dehydratase. Gly-314 serves as a coordination point for (6S)-NADPHX. Residues 360 to 366 (HAGEFRR) are NADPHX 2; for dehydratase activity. Residues 397–401 (KGRVD) and 417–426 (TPAMTVGGTG) each bind ADP. Asp-427 lines the (6S)-NADPHX pocket.

The protein in the N-terminal section; belongs to the NnrE/AIBP family. It in the C-terminal section; belongs to the NnrD/CARKD family. K(+) is required as a cofactor.

It carries out the reaction (6S)-NADHX + ADP = AMP + phosphate + NADH + H(+). The catalysed reaction is (6S)-NADPHX + ADP = AMP + phosphate + NADPH + H(+). The enzyme catalyses (6R)-NADHX = (6S)-NADHX. It catalyses the reaction (6R)-NADPHX = (6S)-NADPHX. Functionally, bifunctional enzyme that catalyzes the epimerization of the S- and R-forms of NAD(P)HX and the dehydration of the S-form of NAD(P)HX at the expense of ADP, which is converted to AMP. This allows the repair of both epimers of NAD(P)HX, a damaged form of NAD(P)H that is a result of enzymatic or heat-dependent hydration. The protein is Bifunctional NAD(P)H-hydrate repair enzyme Nnr (nnr) of Methanopyrus kandleri (strain AV19 / DSM 6324 / JCM 9639 / NBRC 100938).